The primary structure comprises 83 residues: Small ribosomal subunit protein uS17 (83 aa).

This sequence belongs to the universal ribosomal protein uS17 family. Part of the 30S ribosomal subunit.

In terms of biological role, one of the primary rRNA binding proteins, it binds specifically to the 5'-end of 16S ribosomal RNA. This Chlamydia trachomatis serovar L2 (strain ATCC VR-902B / DSM 19102 / 434/Bu) protein is Small ribosomal subunit protein uS17.